Here is a 145-residue protein sequence, read N- to C-terminus: 3-dehydroquinate dehydratase (145 aa).

The active-site Proton acceptor is Tyr23. Asn75, His81, and Asp88 together coordinate substrate. His101 functions as the Proton donor in the catalytic mechanism. Residues 102–103 and Arg112 each bind substrate; that span reads LS.

The protein belongs to the type-II 3-dehydroquinase family. In terms of assembly, homododecamer.

The enzyme catalyses 3-dehydroquinate = 3-dehydroshikimate + H2O. It functions in the pathway metabolic intermediate biosynthesis; chorismate biosynthesis; chorismate from D-erythrose 4-phosphate and phosphoenolpyruvate: step 3/7. Its function is as follows. Catalyzes a trans-dehydration via an enolate intermediate. In Legionella pneumophila (strain Lens), this protein is 3-dehydroquinate dehydratase.